Consider the following 636-residue polypeptide: Plasma kallikrein (636 aa).

The N-terminal stretch at 1-19 (MIALRQAAYFICLFATVSC) is a signal peptide. Apple domains follow at residues 21 to 104 (CLTQ…LKRC), 111 to 194 (CHRS…LKAC), 201 to 284 (CRVD…LLTC), and 294 to 377 (CHSK…LRLC). Disulfide bonds link Cys21-Cys104, Cys47-Cys77, Cys51-Cys57, Cys111-Cys194, Cys137-Cys166, Cys141-Cys147, Cys201-Cys284, Cys227-Cys256, Cys231-Cys237, Cys294-Cys377, Cys320-Cys349, and Cys324-Cys330. 2 N-linked (GlcNAc...) asparagine glycosylation sites follow: Asn66 and Asn127. N-linked (GlcNAc...) asparagine glycosylation is found at Asn361 and Asn397. Residues 392-627 (IVGGTNASWG…YVDWILEKTQ (236 aa)) form the Peptidase S1 domain. A disulfide bridge links Cys420 with Cys436. The Charge relay system role is filled by His435. N-linked (GlcNAc...) asparagine glycosylation is present at Asn454. The Charge relay system role is filled by Asp484. A glycan (N-linked (GlcNAc...) asparagine) is linked at Asn495. 3 disulfides stabilise this stretch: Cys518–Cys585, Cys549–Cys564, and Cys575–Cys603. Residue Ser579 is the Charge relay system of the active site.

Belongs to the peptidase S1 family. Plasma kallikrein subfamily. As to quaternary structure, forms a heterodimer with SERPINA5. The zymogen is activated by factor XIIa, which cleaves the molecule into a light chain, which contains the active site, and a heavy chain, which associates with HMW kininogen. These chains are linked by one or more disulfide bonds.

It localises to the secreted. The enzyme catalyses Cleaves selectively Arg-|-Xaa and Lys-|-Xaa bonds, including Lys-|-Arg and Arg-|-Ser bonds in (human) kininogen to release bradykinin.. Inhibited by SERPINA5. The enzyme cleaves Lys-Arg and Arg-Ser bonds. It activates, in a reciprocal reaction, factor XII after its binding to a negatively charged surface. It also releases bradykinin from HMW kininogen and may also play a role in the renin-angiotensin system by converting prorenin into renin. The polypeptide is Plasma kallikrein (KLKB1) (Bos taurus (Bovine)).